The chain runs to 230 residues: Protein-L-isoaspartate O-methyltransferase (230 aa).

Residue serine 65 is part of the active site.

This sequence belongs to the methyltransferase superfamily. L-isoaspartyl/D-aspartyl protein methyltransferase family. In terms of assembly, monomer. In terms of tissue distribution, highest contents in seeds.

It localises to the cytoplasm. The enzyme catalyses [protein]-L-isoaspartate + S-adenosyl-L-methionine = [protein]-L-isoaspartate alpha-methyl ester + S-adenosyl-L-homocysteine. Its function is as follows. Catalyzes the methyl esterification of L-isoaspartyl residues in peptides and proteins that result from spontaneous decomposition of normal L-aspartyl and L-asparaginyl residues. It plays a role in the repair and/or degradation of damaged proteins. This enzyme does not act on D-aspartyl residues. The sequence is that of Protein-L-isoaspartate O-methyltransferase (PCM) from Triticum aestivum (Wheat).